Consider the following 344-residue polypeptide: Trace amine-associated receptor 8b (344 aa).

The Extracellular segment spans residues Met-1 to Leu-33. Residues Asn-4 and Asn-18 are each glycosylated (N-linked (GlcNAc...) asparagine). Disulfide bonds link Cys-21–Cys-185 and Cys-104–Cys-189. A helical transmembrane segment spans residues Leu-34 to Ile-54. At Ser-55–Asn-67 the chain is on the cytoplasmic side. Residues Phe-68–Ser-88 form a helical membrane-spanning segment. The Extracellular portion of the chain corresponds to Met-89–Thr-102. A helical transmembrane segment spans residues Phe-103 to Val-127. The Cytoplasmic portion of the chain corresponds to Asp-128–Ser-146. Residues Val-147 to Phe-167 traverse the membrane as a helical segment. Residues Tyr-168–Asp-196 are Extracellular-facing. A helical transmembrane segment spans residues Trp-197–Ser-217. The Cytoplasmic portion of the chain corresponds to Lys-218–Lys-256. The helical transmembrane segment at Ala-257 to Ile-277 threads the bilayer. The Extracellular segment spans residues Asp-278 to Glu-295. Residues Ile-296 to Phe-319 traverse the membrane as a helical segment. At Arg-320–Glu-344 the chain is on the cytoplasmic side.

It belongs to the G-protein coupled receptor 1 family.

It is found in the cell membrane. Olfactory receptor activated by trace amines. Trace amine compounds are enriched in animal body fluids and act on trace amine-associated receptors (TAARs) to elicit both intraspecific and interspecific innate behaviors. Ligand-binding causes a conformation change that triggers signaling via G(s)-class of G alpha proteins (GNAL or GNAS). The chain is Trace amine-associated receptor 8b from Rattus norvegicus (Rat).